The following is a 1463-amino-acid chain: Secretory phospholipase A2 receptor (1463 aa).

The signal sequence occupies residues 1–20 (MLLSPSLLLLLLLGAPRGCA). Residues 21–1397 (EGVAAALTPE…ALPEKGPSHS (1377 aa)) are Extracellular-facing. A Ricin B-type lectin domain is found at 38 to 161 (KGIFVIQSES…GSGGGDICEY (124 aa)). Intrachain disulfides connect Cys51-Cys64, Cys89-Cys106, Cys178-Cys204, Cys192-Cys219, Cys260-Cys354, Cys330-Cys346, Cys406-Cys501, Cys478-Cys493, Cys617-Cys634, Cys699-Cys796, Cys774-Cys788, Cys840-Cys937, Cys914-Cys929, and Cys1067-Cys1087. An N-linked (GlcNAc...) asparagine glycan is attached at Asn93. One can recognise a Fibronectin type-II domain in the interval 173–221 (THGMPCMFPFQYNHQWHHECTREGREDDLLWCATTSRYERDEKWGFCPD). C-type lectin domains are found at residues 238-355 (NSHI…YICK), 385-502 (YNRN…YICK), 522-643 (HGGF…MSLC), 673-797 (GLAS…WICK), 819-938 (YQDA…SICK), 965-1096 (FNYK…GFVC), 1121-1232 (YGNR…GAIC), and 1257-1378 (FKSN…FICK). The N-linked (GlcNAc...) asparagine glycan is linked to Asn454. The N-linked (GlcNAc...) asparagine glycan is linked to Asn1123. 3 cysteine pairs are disulfide-bonded: Cys1209-Cys1223, Cys1280-Cys1377, and Cys1354-Cys1369. A helical membrane pass occupies residues 1398–1418 (IIPLAVVLTLIVIVAICTLSF). Topologically, residues 1419-1463 (CIYKHNGGFFRRLAGFRNPYYPATNFSTVYLEENILISDLEKSDQ) are cytoplasmic. Residues 1436–1442 (NPYYPAT) carry the Endocytosis signal motif.

As to quaternary structure, interacts with sPLA2-IB/PLA2G1B; this interaction mediates intracellular signaling as well as clearance of extracellular sPLA2-IB/PLA2G1B via endocytotic pathway. Interacts with sPLA2-X/PLA2G10; this interaction mediates sPLA2-X/PLA2G10 clearance and inactivation. The secretory phospholipase A2 receptor form may be produced by the action of metalloproteinases. It contains all extracellular domains and only lacks transmembrane and cytosolic regions. It is however unclear whether this form is produced by proteolytic cleavage as suggested by some experiments, or by alternative splicing, as in the case of isoform 2 that shares all characteristics of secretory phospholipase A2 receptor form. In terms of tissue distribution, expressed in podocytes (at protein level). Present in lung macrophage (at protein level). Highly expressed in kidney. Also expressed in pancreas, amnion, choriodecidua and placenta. Isoform 2 is expressed at much lower level.

Its subcellular location is the cell membrane. The protein localises to the secreted. In terms of biological role, receptor for secretory phospholipase A2 (sPLA2). Acts as a receptor for phospholipase sPLA2-IB/PLA2G1B but not sPLA2-IIA/PLA2G2A. Also able to bind to snake PA2-like toxins. Although its precise function remains unclear, binding of sPLA2 to its receptor participates in both positive and negative regulation of sPLA2 functions as well as clearance of sPLA2. Binding of sPLA2-IB/PLA2G1B induces various effects depending on the cell type, such as activation of the mitogen-activated protein kinase (MAPK) cascade to induce cell proliferation, the production of lipid mediators, selective release of arachidonic acid in bone marrow-derived mast cells. In neutrophils, binding of sPLA2-IB/PLA2G1B can activate p38 MAPK to stimulate elastase release and cell adhesion. May be involved in responses in pro-inflammatory cytokine productions during endotoxic shock. Also has endocytic properties and rapidly internalizes sPLA2 ligands, which is particularly important for the clearance of extracellular sPLA2s to protect their potent enzymatic activities. The soluble secretory phospholipase A2 receptor form is circulating and acts as a negative regulator of sPLA2 functions by blocking the biological functions of sPLA2-IB/PLA2G1B. In podocytes, binding of sPLA2-IB/PLA2G1B can regulate podocyte survival and glomerular homeostasis. This Homo sapiens (Human) protein is Secretory phospholipase A2 receptor (PLA2R1).